The following is a 138-amino-acid chain: Thyrotropin subunit beta (138 aa).

An N-terminal signal peptide occupies residues 1–20 (MNAVVLFSVLFALACGQVSS). Disulfide bonds link C22-C72, C36-C87, C39-C125, C47-C103, C51-C105, and C108-C115. N-linked (GlcNAc...) asparagine glycosylation is present at N43. Positions 133-138 (LGGFSG) are excised as a propeptide.

This sequence belongs to the glycoprotein hormones subunit beta family. As to quaternary structure, heterodimer of a common alpha chain and a unique beta chain which confers biological specificity to thyrotropin, lutropin, follitropin and gonadotropin.

It localises to the secreted. Indispensable for the control of thyroid structure and metabolism. The chain is Thyrotropin subunit beta (Tshb) from Rattus norvegicus (Rat).